The primary structure comprises 365 residues: NAD(P)H-quinone oxidoreductase subunit 1, chloroplastic (365 aa).

6 helical membrane passes run 32–52 (LFPI…IVWL), 98–118 (YLFS…YLII), 129–149 (LSIG…GLLM), 257–279 (LFYV…LYLG), 302–322 (VFGT…FLFI), and 338–358 (LLNL…LLTT).

Belongs to the complex I subunit 1 family. As to quaternary structure, NDH is composed of at least 16 different subunits, 5 of which are encoded in the nucleus.

The protein resides in the plastid. It is found in the chloroplast thylakoid membrane. The catalysed reaction is a plastoquinone + NADH + (n+1) H(+)(in) = a plastoquinol + NAD(+) + n H(+)(out). The enzyme catalyses a plastoquinone + NADPH + (n+1) H(+)(in) = a plastoquinol + NADP(+) + n H(+)(out). Its function is as follows. NDH shuttles electrons from NAD(P)H:plastoquinone, via FMN and iron-sulfur (Fe-S) centers, to quinones in the photosynthetic chain and possibly in a chloroplast respiratory chain. The immediate electron acceptor for the enzyme in this species is believed to be plastoquinone. Couples the redox reaction to proton translocation, and thus conserves the redox energy in a proton gradient. The sequence is that of NAD(P)H-quinone oxidoreductase subunit 1, chloroplastic from Spinacia oleracea (Spinach).